Here is a 471-residue protein sequence, read N- to C-terminus: GTPase Der (471 aa).

EngA-type G domains are found at residues 5–168 and 186–359; these read PVIA…TDLE and IRVA…DSAF. GTP-binding positions include 11-18, 58-62, 120-123, 192-199, 239-243, and 304-307; these read GRPNVGKS, DTGGI, NKTD, DTAGV, and NKWD. One can recognise a KH-like domain in the interval 360-444; the sequence is IKIGTNELTR…PIRLEFKSGT (85 aa).

This sequence belongs to the TRAFAC class TrmE-Era-EngA-EngB-Septin-like GTPase superfamily. EngA (Der) GTPase family. Associates with the 50S ribosomal subunit.

In terms of biological role, GTPase that plays an essential role in the late steps of ribosome biogenesis. The sequence is that of GTPase Der from Alcanivorax borkumensis (strain ATCC 700651 / DSM 11573 / NCIMB 13689 / SK2).